The primary structure comprises 316 residues: Pleckstrin homology domain-containing family F member 1 homolog (316 aa).

A PH domain is found at Val35–Glu131. Residues Asp152–Lys212 form an FYVE-type zinc finger. The Zn(2+) site is built by Cys158, Cys161, Cys175, Cys178, Cys183, Cys186, Cys204, and Cys207. Positions Pro215–Cys316 are disordered. Residues Ser244–Thr253 are compositionally biased toward acidic residues. A compositionally biased stretch (low complexity) spans Ser279 to Ser292. Polar residues predominate over residues Val298–Cys316.

Interacts with Gdi (Rab GDP dissociation inhibitor). As to expression, in ovaries, expressed both in the germ line cells and in the overlying somatic follicular epithelium.

Its subcellular location is the apical cell membrane. It is found in the endosome membrane. The protein localises to the cytoplasm. It localises to the cell cortex. In terms of biological role, functions in the regulation of endosome morphology and late endosome formation. Has a role in controlling trafficking from early to late endosomes and from late endosomes to lysosomes. Important for localization of Gdi to the endosomal membranes. May function in controlling the activity of multiple regulators in the endocytic pathway, perhaps by positively controlling those involved in the early steps of endocytosis such as Rab5 and hrs, and negative regulating those involved in the late stages of endocytosis like car and VhaSFD. The protein is Pleckstrin homology domain-containing family F member 1 homolog of Drosophila melanogaster (Fruit fly).